Consider the following 948-residue polypeptide: MMSSNILSRFLPPTGSPSVYETIRQHDAGSEYSDLEERAGLVIEDQQEQYSDRELEDALADAQDSEIVSPSTALLNQARSVKAPEERASPSGTRRRKSSRPRWMAQESPLGYELDDHDEDVPQSLLVEGHHEDLKPRLPPPPQSHNRSDRRRTPSPGPSSRPTEARWNERGVHQQPPPSESGHPIGRWFTGQHPGLANVDPKKKAMWRWANVEDLDNFLKDVYVYFLGNGIWSILLTRVLNLLTFAFVVGFSTFLTNCIDYPKVRRSKTLNDILVPQCTANMSGSSTFLLWLFSFFWIGKLFQYLLDIRRLKHLHDFYLYLLGVSDAEVQTISWQEVVSRLMALRDSNPSTAAAVSAKHRRFLGSQSKQRMDAHDIANRLMRKENYMIALVNKDILDLTLPIPFLKNRQLFSRTMEWNLNLCVMDYVFNEQGQLRTLFLKDTHRRALSDGLRRRFIFAGVMNIFVAPFIVVYFMMHYFFRYFNEFKKNPGQIGSRQYTPMAEWKFREFNELWHLFERRINMSYPFASRYIDQFPKDKTVQVARFVAFISGALASVLALASVIDPELFLGFEITHDRTVLFYLGIFGTVWAFARGLAPEETDVFDPEYALLELIDFTHYFPSGWKGRLHSDDVRKEFAILYQMKIVIFLEEILSMIFTPFVLWFSLPKCSDRLIDFFREFTVHVDGVGYLCSFAVFDFKKGTNVLSQAGPGRRDPGKQDLRTDYFSTKDGKMLASYYGFLDNYGTTHQATSRRPFHPPPTLPTLGSPTAGGFGALPDRPDHLQTRLGPTPGAPFGPQSMIGTSKPRQMGGFDHRSPAPSILLDPHHQPSTTGFRAAARIAPQQHQRSRLGRSHHPSTDPIDDEEEPLSQDGHDSTTRQSGARTGTSSAGAGTSDSNLGDSWRMNPLSNDEDEGDEGENIDAIAGGGGVLGLIQQFQKANTEGRRTNVGI.

3 disordered regions span residues 1–20, 46–104, and 130–193; these read MMSS…PSVY, QQEQ…PRWM, and HHED…TGQH. Residues 1 to 230 lie on the Cytoplasmic side of the membrane; that stretch reads MMSSNILSRF…DVYVYFLGNG (230 aa). Residues 66 to 79 show a composition bias toward polar residues; sequence EIVSPSTALLNQAR. Residues 163–172 show a composition bias toward basic and acidic residues; sequence TEARWNERGV. The helical transmembrane segment at 231-251 threads the bilayer; sequence IWSILLTRVLNLLTFAFVVGF. Residues 252–287 are Lumenal-facing; that stretch reads STFLTNCIDYPKVRRSKTLNDILVPQCTANMSGSST. Residues 288–308 traverse the membrane as a helical segment; the sequence is FLLWLFSFFWIGKLFQYLLDI. The Cytoplasmic portion of the chain corresponds to 309–454; sequence RRLKHLHDFY…RALSDGLRRR (146 aa). The stretch at 455–475 is an intramembrane region; it reads FIFAGVMNIFVAPFIVVYFMM. Residues 476-543 are Cytoplasmic-facing; that stretch reads HYFFRYFNEF…PKDKTVQVAR (68 aa). A helical transmembrane segment spans residues 544-564; that stretch reads FVAFISGALASVLALASVIDP. The Lumenal portion of the chain corresponds to 565–576; that stretch reads ELFLGFEITHDR. Residues 577–597 form a helical membrane-spanning segment; that stretch reads TVLFYLGIFGTVWAFARGLAP. At 598–643 the chain is on the cytoplasmic side; sequence EETDVFDPEYALLELIDFTHYFPSGWKGRLHSDDVRKEFAILYQMK. Residues 644–664 lie within the membrane without spanning it; the sequence is IVIFLEEILSMIFTPFVLWFS. Residues 665–948 lie on the Cytoplasmic side of the membrane; it reads LPKCSDRLID…TEGRRTNVGI (284 aa). The interval 762–923 is disordered; sequence TLGSPTAGGF…EGENIDAIAG (162 aa). Positions 844–853 are enriched in basic residues; it reads QRSRLGRSHH. Positions 878–892 are enriched in low complexity; that stretch reads SGARTGTSSAGAGTS. Over residues 907-917 the composition is skewed to acidic residues; it reads NDEDEGDEGEN.

The protein belongs to the ATG9 family. Homotrimer; forms a homotrimer with a central pore that forms a path between the two membrane leaflets. Phosphorylated by atg1. Atg1 phosphorylation is required for preautophagosome elongation.

It is found in the preautophagosomal structure membrane. The protein localises to the cytoplasmic vesicle membrane. Its subcellular location is the golgi apparatus membrane. It localises to the endoplasmic reticulum membrane. The enzyme catalyses a 1,2-diacyl-sn-glycero-3-phosphocholine(in) = a 1,2-diacyl-sn-glycero-3-phosphocholine(out). It catalyses the reaction a 1,2-diacyl-sn-glycero-3-phospho-L-serine(in) = a 1,2-diacyl-sn-glycero-3-phospho-L-serine(out). The catalysed reaction is a 1,2-diacyl-sn-glycero-3-phosphoethanolamine(in) = a 1,2-diacyl-sn-glycero-3-phosphoethanolamine(out). It carries out the reaction a 1,2-diacyl-sn-glycero-3-phospho-(1D-myo-inositol-3-phosphate)(in) = a 1,2-diacyl-sn-glycero-3-phospho-(1D-myo-inositol-3-phosphate)(out). Its function is as follows. Phospholipid scramblase involved in autophagy and cytoplasm to vacuole transport (Cvt) vesicle formation. Cycles between the preautophagosomal structure/phagophore assembly site (PAS) and the cytoplasmic vesicle pool and supplies membrane for the growing autophagosome. Lipid scramblase activity plays a key role in preautophagosomal structure/phagophore assembly by distributing the phospholipids that arrive through atg2 from the cytoplasmic to the luminal leaflet of the bilayer, thereby driving autophagosomal membrane expansion. Required for mitophagy. Also involved in endoplasmic reticulum-specific autophagic process and is essential for the survival of cells subjected to severe ER stress. Different machineries are required for anterograde trafficking to the PAS during either the Cvt pathway or bulk autophagy and for retrograde trafficking. The chain is Autophagy-related protein 9 (atg9) from Penicillium rubens (strain ATCC 28089 / DSM 1075 / NRRL 1951 / Wisconsin 54-1255) (Penicillium chrysogenum).